An 821-amino-acid polypeptide reads, in one-letter code: G-type lectin S-receptor-like serine/threonine-protein kinase SD2-5 (821 aa).

The signal sequence occupies residues 1–21 (MRGVFIVIVTCLVFLPDPLRA). Residues 22-429 (GVASIGSITP…NGEDDGKHFP (408 aa)) lie on the Extracellular side of the membrane. The Bulb-type lectin domain occupies 33–148 (FGGSQMNYIN…DGTSIWESFD (116 aa)). 4 N-linked (GlcNAc...) asparagine glycosylation sites follow: Asn-51, Asn-121, Asn-174, and Asn-248. The region spanning 280 to 314 (PSDLCGTPEPCGPYYVCSGSKVCGCVSGLSRARSD) is the EGF-like; atypical domain. 2 disulfide bridges follow: Cys-284-Cys-296 and Cys-290-Cys-302. Residues 323–411 (CKKTKDNATL…SGFVSYIKIA (89 aa)) enclose the PAN domain. Asn-329, Asn-370, and Asn-380 each carry an N-linked (GlcNAc...) asparagine glycan. 2 cysteine pairs are disulfide-bonded: Cys-363–Cys-385 and Cys-367–Cys-373. Residues 430 to 450 (YVVIIVVVTVFIIAVLIFVAF) form a helical membrane-spanning segment. Over 451–821 (RIHKRKKMIL…LSAVRLSGPR (371 aa)) the chain is Cytoplasmic. The 276-residue stretch at 493–768 (NNFSVKLGQG…KVVQMLEGVF (276 aa)) folds into the Protein kinase domain. Residues 499 to 507 (LGQGGFGSV) and Lys-521 contribute to the ATP site. Residues 581 to 599 (KDGDVLLDWDTRFNIALGT) are caM-binding. Asp-618 serves as the catalytic Proton acceptor. A Phosphoserine modification is found at Ser-635. Residue Thr-652 is modified to Phosphothreonine.

It belongs to the protein kinase superfamily. Ser/Thr protein kinase family. As to quaternary structure, interacts with PUB9, PUB13, PUB14 and PUB29.

The protein resides in the membrane. It carries out the reaction L-seryl-[protein] + ATP = O-phospho-L-seryl-[protein] + ADP + H(+). The enzyme catalyses L-threonyl-[protein] + ATP = O-phospho-L-threonyl-[protein] + ADP + H(+). The sequence is that of G-type lectin S-receptor-like serine/threonine-protein kinase SD2-5 (SD25) from Arabidopsis thaliana (Mouse-ear cress).